A 902-amino-acid polypeptide reads, in one-letter code: Cytosolic 10-formyltetrahydrofolate dehydrogenase (902 aa).

Residues 1-310 (MKIAVIGQSL…LASNFFKGAA (310 aa)) are hydrolase domain. Position 9 is a phosphoserine (Ser-9). At Lys-38 the chain carries N6-succinyllysine. Residue 88–90 (QFI) participates in (6R)-10-formyltetrahydrofolate binding. His-106 acts as the Proton donor in catalysis. Asp-142 is a binding site for (6R)-10-formyltetrahydrofolate. In terms of domain architecture, Carrier spans 318-395 (EAELVTAEAV…DFIQLLVRKL (78 aa)). Residue Ser-354 is modified to O-(pantetheine 4'-phosphoryl)serine. Residues 417–902 (TVRMPHQLFI…LRVKTVTFEY (486 aa)) are aldehyde dehydrogenase domain. Residues 571–573 (IPW) and 597–600 (KPAQ) each bind NADP(+). Phosphoserine is present on residues Ser-629 and Ser-631. NADP(+) is bound by residues 630-635 (GSLVGQ) and 650-651 (GS). An N6-succinyllysine modification is found at Lys-660. Glu-673 functions as the Proton acceptor in the catalytic mechanism. Residue 673–674 (EL) coordinates NADP(+). Catalysis depends on Cys-707, which acts as the Proton donor. Residue Lys-757 coordinates NADP(+). An N6-succinyllysine modification is found at Lys-767. 804–806 (ESF) provides a ligand contact to NADP(+). Position 825 is a phosphoserine (Ser-825). The residue at position 882 (Lys-882) is an N6-acetyllysine.

It in the N-terminal section; belongs to the GART family. The protein in the C-terminal section; belongs to the aldehyde dehydrogenase family. ALDH1L subfamily. As to quaternary structure, homotetramer. Phosphopantetheinylation at Ser-354 by AASDHPPT is required for the formyltetrahydrofolate dehydrogenase activity. Highly expressed in liver, pancreas and kidney.

It is found in the cytoplasm. The protein resides in the cytosol. It catalyses the reaction (6R)-10-formyltetrahydrofolate + NADP(+) + H2O = (6S)-5,6,7,8-tetrahydrofolate + CO2 + NADPH + H(+). Cytosolic 10-formyltetrahydrofolate dehydrogenase that catalyzes the NADP(+)-dependent conversion of 10-formyltetrahydrofolate to tetrahydrofolate and carbon dioxide. May also have an NADP(+)-dependent aldehyde dehydrogenase activity towards formaldehyde, acetaldehyde, propionaldehyde, and benzaldehyde. The polypeptide is Cytosolic 10-formyltetrahydrofolate dehydrogenase (Homo sapiens (Human)).